The following is a 285-amino-acid chain: Methanethiol S-methyltransferase 1 (285 aa).

5 helical membrane-spanning segments follow: residues 55 to 75 (AYLV…GLVV), 88 to 108 (AEAV…HSVM), 132 to 152 (LFAS…PTVI), 162 to 182 (VTLV…TFII), and 224 to 244 (FIVA…FAAV).

This sequence belongs to the nurim family.

The protein resides in the membrane. The catalysed reaction is methanethiol + S-adenosyl-L-methionine = dimethyl sulfide + S-adenosyl-L-homocysteine + H(+). In terms of biological role, catalyzes the methylation of methanethiol (MeSH) to yield dimethylsulphide (DMS). The chain is Methanethiol S-methyltransferase 1 from Bradyrhizobium diazoefficiens (strain JCM 10833 / BCRC 13528 / IAM 13628 / NBRC 14792 / USDA 110).